The sequence spans 337 residues: Ketol-acid reductoisomerase (NADP(+)) (337 aa).

A KARI N-terminal Rossmann domain is found at 3-183; the sequence is VEMFYDADAD…GGARAGVIKT (181 aa). NADP(+) is bound by residues 26–29, Lys-49, Ser-52, Ser-54, and 84–87; these read YGSQ and DTAQ. His-109 is an active-site residue. An NADP(+)-binding site is contributed by Gly-135. Residues 184–329 enclose the KARI C-terminal knotted domain; that stretch reads TFKDETETDL…KKLRDLMSWV (146 aa). 4 residues coordinate Mg(2+): Asp-192, Glu-196, Glu-228, and Glu-232. Position 253 (Ser-253) interacts with substrate.

This sequence belongs to the ketol-acid reductoisomerase family. Mg(2+) is required as a cofactor.

It carries out the reaction (2R)-2,3-dihydroxy-3-methylbutanoate + NADP(+) = (2S)-2-acetolactate + NADPH + H(+). It catalyses the reaction (2R,3R)-2,3-dihydroxy-3-methylpentanoate + NADP(+) = (S)-2-ethyl-2-hydroxy-3-oxobutanoate + NADPH + H(+). The protein operates within amino-acid biosynthesis; L-isoleucine biosynthesis; L-isoleucine from 2-oxobutanoate: step 2/4. It participates in amino-acid biosynthesis; L-valine biosynthesis; L-valine from pyruvate: step 2/4. Involved in the biosynthesis of branched-chain amino acids (BCAA). Catalyzes an alkyl-migration followed by a ketol-acid reduction of (S)-2-acetolactate (S2AL) to yield (R)-2,3-dihydroxy-isovalerate. In the isomerase reaction, S2AL is rearranged via a Mg-dependent methyl migration to produce 3-hydroxy-3-methyl-2-ketobutyrate (HMKB). In the reductase reaction, this 2-ketoacid undergoes a metal-dependent reduction by NADPH to yield (R)-2,3-dihydroxy-isovalerate. This chain is Ketol-acid reductoisomerase (NADP(+)), found in Mycolicibacterium gilvum (strain PYR-GCK) (Mycobacterium gilvum (strain PYR-GCK)).